The following is a 345-amino-acid chain: Protein-glutamate methylesterase/protein-glutamine glutaminase (345 aa).

The region spanning 5 to 123 (KVIVVDDSVL…ELSKMKDDLI (119 aa)) is the Response regulatory domain. At D56 the chain carries 4-aspartylphosphate. In terms of domain architecture, CheB-type methylesterase spans 153-343 (SSDSIEAVVI…DEIIKIVRGL (191 aa)). Catalysis depends on residues S165, H192, and D285.

Belongs to the CheB family. Phosphorylated by CheA. Phosphorylation of the N-terminal regulatory domain activates the methylesterase activity.

It localises to the cytoplasm. It carries out the reaction [protein]-L-glutamate 5-O-methyl ester + H2O = L-glutamyl-[protein] + methanol + H(+). The enzyme catalyses L-glutaminyl-[protein] + H2O = L-glutamyl-[protein] + NH4(+). Functionally, involved in chemotaxis. Part of a chemotaxis signal transduction system that modulates chemotaxis in response to various stimuli. Catalyzes the demethylation of specific methylglutamate residues introduced into the chemoreceptors (methyl-accepting chemotaxis proteins or MCP) by CheR. Also mediates the irreversible deamidation of specific glutamine residues to glutamic acid. In Clostridium acetobutylicum (strain ATCC 824 / DSM 792 / JCM 1419 / IAM 19013 / LMG 5710 / NBRC 13948 / NRRL B-527 / VKM B-1787 / 2291 / W), this protein is Protein-glutamate methylesterase/protein-glutamine glutaminase.